Consider the following 263-residue polypeptide: Phosphate import ATP-binding protein PstB (263 aa).

One can recognise an ABC transporter domain in the interval 17-258 (IDVRDLNFYY…PRRKETEDYI (242 aa)). 49–56 (GPSGCGKS) is an ATP binding site.

It belongs to the ABC transporter superfamily. Phosphate importer (TC 3.A.1.7) family. As to quaternary structure, the complex is composed of two ATP-binding proteins (PstB), two transmembrane proteins (PstC and PstA) and a solute-binding protein (PstS).

Its subcellular location is the cell inner membrane. It catalyses the reaction phosphate(out) + ATP + H2O = ADP + 2 phosphate(in) + H(+). In terms of biological role, part of the ABC transporter complex PstSACB involved in phosphate import. Responsible for energy coupling to the transport system. The protein is Phosphate import ATP-binding protein PstB of Ralstonia nicotianae (strain ATCC BAA-1114 / GMI1000) (Ralstonia solanacearum).